Consider the following 178-residue polypeptide: Conodipine-P3 (178 aa).

Residues 1 to 24 (MKLLAPVLWAMAALGVTWLVAVDS) form the signal peptide. 4-hydroxyproline is present on proline 38. 4-hydroxyproline; partial occurs at positions 42 and 49. Histidine 54 is an active-site residue. Positions 98–130 (KREVTSHRATSIAHSRLWKTALDQKSFLNRKAR) are cleaved as a propeptide — interchain peptide. Glutamine 131 carries the pyrrolidone carboxylic acid modification. Proline 137 is modified (4-hydroxyproline; partial).

Belongs to the phospholipase A2 family. Group IX subfamily. In terms of assembly, heterodimer of an alpha and a beta chain; probably disulfide-linked. Requires Ca(2+) as cofactor. In terms of tissue distribution, expressed by the venom duct.

The protein resides in the secreted. The enzyme catalyses a 1,2-diacyl-sn-glycero-3-phosphocholine + H2O = a 1-acyl-sn-glycero-3-phosphocholine + a fatty acid + H(+). Its function is as follows. Catalyzes the calcium-dependent hydrolysis of the 2-acyl groups in 3-sn-phosphoglycerides. This Conus purpurascens (Purple cone) protein is Conodipine-P3.